We begin with the raw amino-acid sequence, 342 residues long: NLP effector protein Pc107869 (342 aa).

An N-terminal signal peptide occupies residues 1–19; the sequence is MKTGFFLFAACAALVAVQA. A glycan (N-linked (GlcNAc...) asparagine) is linked at Asn24. The disordered stretch occupies residues 41–125; the sequence is APRTKAPPTK…PTPDPGPWEA (85 aa). Over residues 55–75 the composition is skewed to low complexity; sequence QQSSLSGSQEQQQEQIETPAP. The segment covering 93–121 has biased composition (pro residues); it reads TPAPTPAPTPAPTPAPTPAPTPAPTPDPG. The Hepta-peptide GHRHDWE motif signature appears at 226-232; sequence GHRHDWE.

Belongs to the Necrosis inducing protein (NPP1) family.

It localises to the secreted. Its function is as follows. Secreted effector that contributes strongly to virulence during infection by P.capsici. Induces cell death in the Solanaceae, including Nicotiana benthamiana. This is NLP effector protein Pc107869 from Phytophthora capsici.